We begin with the raw amino-acid sequence, 122 residues long: Acidic phospholipase A2 (122 aa).

Disulfide bonds link Cys26-Cys115, Cys28-Cys44, Cys43-Cys95, Cys49-Cys122, Cys50-Cys88, Cys57-Cys81, and Cys75-Cys86. Ca(2+)-binding residues include Tyr27, Gly29, and Gly31. His47 is a catalytic residue. Residue Asp48 coordinates Ca(2+). The active site involves Asp89.

Ca(2+) serves as cofactor. In terms of tissue distribution, expressed by the venom gland.

The protein resides in the secreted. It carries out the reaction a 1,2-diacyl-sn-glycero-3-phosphocholine + H2O = a 1-acyl-sn-glycero-3-phosphocholine + a fatty acid + H(+). Functionally, PLA2 catalyzes the calcium-dependent hydrolysis of the 2-acyl groups in 3-sn-phosphoglycerides. This Lachesis stenophrys (Central American bushmaster) protein is Acidic phospholipase A2.